The sequence spans 173 residues: Protein FAM180A (173 aa).

Positions 1–17 (MSWKALTILLVFSSTQA) are cleaved as a signal peptide.

Belongs to the FAM180 family.

It is found in the secreted. The chain is Protein FAM180A (Fam180a) from Mus musculus (Mouse).